Reading from the N-terminus, the 362-residue chain is Chorismate synthase (362 aa).

Arg-47 contacts NADP(+). FMN-binding positions include 124-126 (RSS), Gly-286, 301-305 (KPTAT), and Arg-327.

It belongs to the chorismate synthase family. In terms of assembly, homotetramer. The cofactor is FMNH2.

It catalyses the reaction 5-O-(1-carboxyvinyl)-3-phosphoshikimate = chorismate + phosphate. It participates in metabolic intermediate biosynthesis; chorismate biosynthesis; chorismate from D-erythrose 4-phosphate and phosphoenolpyruvate: step 7/7. Functionally, catalyzes the anti-1,4-elimination of the C-3 phosphate and the C-6 proR hydrogen from 5-enolpyruvylshikimate-3-phosphate (EPSP) to yield chorismate, which is the branch point compound that serves as the starting substrate for the three terminal pathways of aromatic amino acid biosynthesis. This reaction introduces a second double bond into the aromatic ring system. This is Chorismate synthase from Synechococcus elongatus (strain ATCC 33912 / PCC 7942 / FACHB-805) (Anacystis nidulans R2).